Consider the following 542-residue polypeptide: MTRFIFITGGVVSSLGKGLASAALGALLQARGFKVRLRKLDPYLNVDPGTMSPYQHGEVYVTDDGAETDLDLGHYERFTGVPTRQSDNITTGRIYSNVIAKERRGDYLGATVQVIPHITDAIKEFVQADLTDEDFCLVEVGGTVGDIESLPFLEAIRQLGNELGPDRALFTHVTLLPYIPAAGELKTKPTQHSVKELLSVGIQPQILLCRADRPIPDNERRKIALFCNIKQEAVIAALDVDTIYQVPISYHEQGFDTQVLKFFGMPVGGEPDLSRWQEIVSRVRHPEGEVTIAVVGKYTSLLDAYKSLGEALTHGGIANNVKVKLDWIDAEIFETDGAIHRLEGVHGILVPGGFGERGTEGKIKAAQFARERGIPYFGICFGMQMAVIEATRHLAGLENAGSSEFGHPDPAVVGLMTEWSRGNQLEKRAAGGDLGGTMRLGSYDCHLLPGTKVRDIYGADFIQERHRHRYEVNINFRDKLEAVGLTFSGLSPDGVLPEIVELPTHPWYIGVQFHPELKSKPFEPHPLFTSFIRAAIEQSRLV.

The interval 1-265 is amidoligase domain; the sequence is MTRFIFITGG…DTQVLKFFGM (265 aa). Ser-13 contacts CTP. A UTP-binding site is contributed by Ser-13. ATP is bound at residue 14–19; the sequence is SLGKGL. Tyr-54 is an L-glutamine binding site. Asp-71 contacts ATP. Residues Asp-71 and Glu-139 each contribute to the Mg(2+) site. CTP contacts are provided by residues 146–148, 186–191, and Lys-222; these read DIE and KTKPTQ. UTP contacts are provided by residues 186 to 191 and Lys-222; that span reads KTKPTQ. Residues 291 to 541 form the Glutamine amidotransferase type-1 domain; it reads TIAVVGKYTS…IRAAIEQSRL (251 aa). Gly-353 is an L-glutamine binding site. Catalysis depends on Cys-380, which acts as the Nucleophile; for glutamine hydrolysis. Residues 381 to 384, Glu-404, and Arg-469 each bind L-glutamine; that span reads FGMQ. Residues His-514 and Glu-516 contribute to the active site.

It belongs to the CTP synthase family. In terms of assembly, homotetramer.

It carries out the reaction UTP + L-glutamine + ATP + H2O = CTP + L-glutamate + ADP + phosphate + 2 H(+). The enzyme catalyses L-glutamine + H2O = L-glutamate + NH4(+). It catalyses the reaction UTP + NH4(+) + ATP = CTP + ADP + phosphate + 2 H(+). It functions in the pathway pyrimidine metabolism; CTP biosynthesis via de novo pathway; CTP from UDP: step 2/2. Its activity is regulated as follows. Allosterically activated by GTP, when glutamine is the substrate; GTP has no effect on the reaction when ammonia is the substrate. The allosteric effector GTP functions by stabilizing the protein conformation that binds the tetrahedral intermediate(s) formed during glutamine hydrolysis. Inhibited by the product CTP, via allosteric rather than competitive inhibition. Catalyzes the ATP-dependent amination of UTP to CTP with either L-glutamine or ammonia as the source of nitrogen. Regulates intracellular CTP levels through interactions with the four ribonucleotide triphosphates. The sequence is that of CTP synthase from Rhodospirillum centenum (strain ATCC 51521 / SW).